The primary structure comprises 155 residues: Aspartate carbamoyltransferase regulatory chain (155 aa).

Residues Cys113, Cys118, Cys141, and Cys144 each coordinate Zn(2+).

Belongs to the PyrI family. As to quaternary structure, contains catalytic and regulatory chains. Zn(2+) is required as a cofactor.

Functionally, involved in allosteric regulation of aspartate carbamoyltransferase. The chain is Aspartate carbamoyltransferase regulatory chain from Methanococcus aeolicus (strain ATCC BAA-1280 / DSM 17508 / OCM 812 / Nankai-3).